Reading from the N-terminus, the 466-residue chain is VGFKAGVKEYKLTYYTPEYETKDTDILAAFRVTPQPGVPPEEAGAAVAAESSTGTWTTVWTDGLTSLDRYKGRCYNIEPVLGETDQYICYVAYPLDLFEEGSVTNMFTSIVGNVFGFKALRALRLEDLRIPPAYIKTFQGPPHGIQVERDELNKYGRPLLGCTIKPKLGLSAKNYGRACYECLRGGLDFTKDDENVNSQPFMRWRDRFLFCAEAIYKAQAETGEIKGHYLNATAGTCEEMIKRAVFARELGVPIVMHDYLTGGFTANTSLAHYCRDNGLLLHIHRAMHAVIDRQKNHGMHFRVLAKALRLSGGDHIHSGTVVGKLEGERDITLGFVDLLRDDFIEKDRSRGIYFTQDWVSLPGVIPVASGGIHVWHMPALTEIFGDDSVLQFGGGTLGHPWGNAPGAVANRVALEACVQARNEGRDLAAEGNEIIREPSKWSPELAAACEVWKEIKFEFKAVDTLD.

An N6,N6,N6-trimethyllysine modification is found at K4. Residues N113 and T163 each contribute to the substrate site. The active-site Proton acceptor is K165. K167 contributes to the substrate binding site. Mg(2+) contacts are provided by K191, D193, and E194. At K191 the chain carries N6-carboxylysine. H284 functions as the Proton acceptor in the catalytic mechanism. Substrate is bound by residues R285, H317, and S369.

Belongs to the RuBisCO large chain family. Type I subfamily. Heterohexadecamer of 8 large chains and 8 small chains; disulfide-linked. The disulfide link is formed within the large subunit homodimers. The cofactor is Mg(2+). Post-translationally, the disulfide bond which can form in the large chain dimeric partners within the hexadecamer appears to be associated with oxidative stress and protein turnover.

Its subcellular location is the plastid. It is found in the chloroplast. It carries out the reaction 2 (2R)-3-phosphoglycerate + 2 H(+) = D-ribulose 1,5-bisphosphate + CO2 + H2O. It catalyses the reaction D-ribulose 1,5-bisphosphate + O2 = 2-phosphoglycolate + (2R)-3-phosphoglycerate + 2 H(+). Its function is as follows. RuBisCO catalyzes two reactions: the carboxylation of D-ribulose 1,5-bisphosphate, the primary event in carbon dioxide fixation, as well as the oxidative fragmentation of the pentose substrate in the photorespiration process. Both reactions occur simultaneously and in competition at the same active site. This is Ribulose bisphosphate carboxylase large chain from Justicia odora (Water willow).